The sequence spans 311 residues: Porphobilinogen deaminase (311 aa).

Cys243 is subject to S-(dipyrrolylmethanemethyl)cysteine.

This sequence belongs to the HMBS family. In terms of assembly, monomer. It depends on dipyrromethane as a cofactor.

It carries out the reaction 4 porphobilinogen + H2O = hydroxymethylbilane + 4 NH4(+). Its pathway is porphyrin-containing compound metabolism; protoporphyrin-IX biosynthesis; coproporphyrinogen-III from 5-aminolevulinate: step 2/4. In terms of biological role, tetrapolymerization of the monopyrrole PBG into the hydroxymethylbilane pre-uroporphyrinogen in several discrete steps. The sequence is that of Porphobilinogen deaminase from Aliivibrio fischeri (strain ATCC 700601 / ES114) (Vibrio fischeri).